Reading from the N-terminus, the 1135-residue chain is Exportin-5 (1135 aa).

One can recognise an Importin N-terminal domain in the interval 32–117 (SQVFLEEIKT…KEKLVTILVD (86 aa)). Positions 630-631 (TE) are pre-siRNA binding.

It belongs to the exportin family. As to quaternary structure, found in a nuclear export complex with RanGTP, exportin and pre-miRNA.

It is found in the nucleus. The protein resides in the cytoplasm. Functionally, mediates the nuclear export of proteins bearing a double-stranded RNA binding domain (dsRBD) and double-stranded RNAs (cargos). In terms of biological role, mediates the nuclear export of micro-RNA precursors, which form short hairpins. The protein is Exportin-5 (xpo5) of Dictyostelium discoideum (Social amoeba).